Reading from the N-terminus, the 1377-residue chain is Temperature-sensitive hemagglutinin tsh autotransporter (1377 aa).

A signal peptide spans Met1–Ala52. Positions Gly53–Gln302 constitute a Peptidase S6 domain. Active-site charge relay system residues include His125, Asp153, and Ser259. An Autotransporter domain is found at Asp1111–Phe1377.

In terms of processing, the C-terminus is blocked. Cleaved to release the mature protein from the outer membrane.

The protein resides in the periplasm. The protein localises to the secreted. It is found in the cell surface. Its subcellular location is the cell outer membrane. Functionally, contributes to the development of lesions and deposition of fibrin in the avian air sacs. It can act both as an adhesin and as a serine protease. Agglutinates erythrocytes while in contact with the extracellular surface of the bacterial cells. Can adhere to purified hemoglobin and bind with great efficiency to extracellular matrix proteins. Cleaves casein and exhibits mucinolytic activity. The chain is Temperature-sensitive hemagglutinin tsh autotransporter (tsh) from Escherichia coli.